The sequence spans 393 residues: Arginine biosynthesis bifunctional protein ArgJ (393 aa).

Positions 142, 168, 179, 265, 388, and 393 each coordinate substrate. Thr-179 serves as the catalytic Nucleophile.

This sequence belongs to the ArgJ family. Heterotetramer of two alpha and two beta chains.

Its subcellular location is the cytoplasm. The catalysed reaction is N(2)-acetyl-L-ornithine + L-glutamate = N-acetyl-L-glutamate + L-ornithine. It catalyses the reaction L-glutamate + acetyl-CoA = N-acetyl-L-glutamate + CoA + H(+). Its pathway is amino-acid biosynthesis; L-arginine biosynthesis; L-ornithine and N-acetyl-L-glutamate from L-glutamate and N(2)-acetyl-L-ornithine (cyclic): step 1/1. It functions in the pathway amino-acid biosynthesis; L-arginine biosynthesis; N(2)-acetyl-L-ornithine from L-glutamate: step 1/4. In terms of biological role, catalyzes two activities which are involved in the cyclic version of arginine biosynthesis: the synthesis of N-acetylglutamate from glutamate and acetyl-CoA as the acetyl donor, and of ornithine by transacetylation between N(2)-acetylornithine and glutamate. The protein is Arginine biosynthesis bifunctional protein ArgJ of Desulfotalea psychrophila (strain LSv54 / DSM 12343).